The following is a 235-amino-acid chain: Class B acid phosphatase (235 aa).

Positions 1–22 (MKNLVKLSLIAMLTAATLPAMA) are cleaved as a signal peptide. D67 acts as the Nucleophile in catalysis. Mg(2+)-binding residues include D67 and D69. The Proton donor role is filled by D69. Substrate is bound by residues 135-136 (TG) and K175. A Mg(2+)-binding site is contributed by D190.

Belongs to the class B bacterial acid phosphatase family. Homotetramer. It depends on Mg(2+) as a cofactor.

The protein resides in the periplasm. It carries out the reaction a phosphate monoester + H2O = an alcohol + phosphate. Its function is as follows. Dephosphorylates several organic phosphate monoesters. Also has a phosphotransferase activity catalyzing the transfer of low-energy phosphate groups from organic phosphate monoesters to free hydroxyl groups of various organic compounds. The sequence is that of Class B acid phosphatase from Aggregatibacter actinomycetemcomitans serotype C (strain D11S-1) (Actinobacillus actinomycetemcomitans).